Consider the following 486-residue polypeptide: Cobyric acid synthase (486 aa).

Positions 248-439 constitute a GATase cobBQ-type domain; that stretch reads VLRIVVPALP…LHGLFDTPHA (192 aa). Cysteine 328 acts as the Nucleophile in catalysis. Histidine 431 is a catalytic residue.

Belongs to the CobB/CobQ family. CobQ subfamily.

The protein operates within cofactor biosynthesis; adenosylcobalamin biosynthesis. In terms of biological role, catalyzes amidations at positions B, D, E, and G on adenosylcobyrinic A,C-diamide. NH(2) groups are provided by glutamine, and one molecule of ATP is hydrogenolyzed for each amidation. The chain is Cobyric acid synthase from Burkholderia mallei (strain ATCC 23344).